A 122-amino-acid polypeptide reads, in one-letter code: Holo-[acyl-carrier-protein] synthase (122 aa).

The Mg(2+) site is built by Asp-5 and Glu-54.

This sequence belongs to the P-Pant transferase superfamily. AcpS family. Mg(2+) serves as cofactor.

It is found in the cytoplasm. The catalysed reaction is apo-[ACP] + CoA = holo-[ACP] + adenosine 3',5'-bisphosphate + H(+). Functionally, transfers the 4'-phosphopantetheine moiety from coenzyme A to a Ser of acyl-carrier-protein. The polypeptide is Holo-[acyl-carrier-protein] synthase (Aquifex aeolicus (strain VF5)).